Reading from the N-terminus, the 479-residue chain is MEIRLRLAPSPTGLFHIGTARTALFNWLYAQKIGGKFLIRIEDTDFLRSKSEYTKNILDGLKWLGLQWNEEPVKQSDRISIHKKYIKKLLECGAAYRCFTTEDEISELREEQKKKGLPPKHDNRHRNLSKEEIETFISQGRTSVIRFKIDEEIQIKWIDQIRGEIKWQGKDLGGDLVLSRRAMGYEIGDPLYNLAVVVDDNFMNITHVVRGEDHISNTAKQILIYEALDFKLPTFSHTPLILNNEGKKLSKRDCVTSIDEFRDMGYLPEALSNYMAFLGWSPKSATSEILSLDEISKIFELSDINKAGAKFSWEKLNWINSQYIKNMETVKLSETIGKYWDNMGWDPPSQEWAIKLAILIKDSMTLLKDAIDQSKPFFLLPPIQKEGKDFLESNDGKTSLKLILNYLIEQNTGKVDKDKAKEIINEISKMHNVKKGILMKSLRVAFFGSLSGPDLIQSWELFSESKSDISRIERCLKSI.

Positions 9-19 match the 'HIGH' region motif; sequence PSPTGLFHIGT. The short motif at 248–252 is the 'KMSKS' region element; it reads KLSKR. Lysine 251 lines the ATP pocket.

The protein belongs to the class-I aminoacyl-tRNA synthetase family. Glutamate--tRNA ligase type 1 subfamily. As to quaternary structure, monomer.

It is found in the cytoplasm. The enzyme catalyses tRNA(Glu) + L-glutamate + ATP = L-glutamyl-tRNA(Glu) + AMP + diphosphate. Functionally, catalyzes the attachment of glutamate to tRNA(Glu) in a two-step reaction: glutamate is first activated by ATP to form Glu-AMP and then transferred to the acceptor end of tRNA(Glu). This is Glutamate--tRNA ligase from Prochlorococcus marinus (strain MIT 9312).